The following is a 323-amino-acid chain: Acetyl-coenzyme A carboxylase carboxyl transferase subunit alpha (323 aa).

Residues 39 to 293 (RLSKKSQQLT…RRALADSLRQ (255 aa)) form the CoA carboxyltransferase C-terminal domain.

This sequence belongs to the AccA family. Acetyl-CoA carboxylase is a heterohexamer composed of biotin carboxyl carrier protein (AccB), biotin carboxylase (AccC) and two subunits each of ACCase subunit alpha (AccA) and ACCase subunit beta (AccD).

The protein localises to the cytoplasm. It carries out the reaction N(6)-carboxybiotinyl-L-lysyl-[protein] + acetyl-CoA = N(6)-biotinyl-L-lysyl-[protein] + malonyl-CoA. It participates in lipid metabolism; malonyl-CoA biosynthesis; malonyl-CoA from acetyl-CoA: step 1/1. Component of the acetyl coenzyme A carboxylase (ACC) complex. First, biotin carboxylase catalyzes the carboxylation of biotin on its carrier protein (BCCP) and then the CO(2) group is transferred by the carboxyltransferase to acetyl-CoA to form malonyl-CoA. The chain is Acetyl-coenzyme A carboxylase carboxyl transferase subunit alpha from Burkholderia multivorans (strain ATCC 17616 / 249).